The chain runs to 218 residues: MHTVKLLCVVFSCLCAVAWGSSHVSNRQPCHSPQLTSGTMKVISTGGHDLASGEFNYDSKANKFRFVEDTTHANKTSYMDVLVHFEEGVLYEIDSKNESCKKETLQFRKHLMEIPPDATHESEIYMGSPSITEQGLRVRVWNGKLPELHAHYSLSTTSCGCLPVSGSYYGEKKDLFFSFFGVETEVDDPQVFVPPAYCEGVSFEEAPDDHSFFDLFHD.

An N-terminal signal peptide occupies residues 1 to 20 (MHTVKLLCVVFSCLCAVAWG). 2 N-linked (GlcNAc...) asparagine glycosylation sites follow: N74 and N97.

The protein belongs to the ependymin family. Forms disulfide-linked dimers. Post-translationally, binds calcium through the terminal sialic acids.

It is found in the secreted. Functionally, may play a role in neural plasticity. May be involved during axon regeneration. The sequence is that of Ependymin (epd) from Devario aequipinnatus (Giant danio).